The chain runs to 523 residues: SWI/SNF and RSC complexes subunit arp9 (523 aa).

Residues 56 to 72 (INMEDPNVKTDETKVET) are compositionally biased toward basic and acidic residues. Disordered regions lie at residues 56 to 92 (INME…KNMG) and 319 to 339 (QKER…NTDV). Residues 79-92 (QPSNSNVTEEKNMG) show a composition bias toward polar residues. The span at 319-336 (QKEREKNGESEKDEKPDN) shows a compositional bias: basic and acidic residues.

Belongs to the actin family. Component of the RSC complex composed of at least arp9, arp42, rsc1, rsc4, rsc7, rsc9, rsc58, sfh1, snf21, ssr1, ssr2, ssr3 and ssr4. The complex interacts with histone and histone variant components of centromeric chromatin. Component of the SWI/SNF global transcription activator complex composed of at least arp9, arp42, snf5, snf22, snf30, sbf59, sol1, ssr1, ssr2, ssr3, ssr4 and tfg3.

The protein resides in the cytoplasm. Its subcellular location is the nucleus. Component of the chromatin structure remodeling complex (RSC), which is involved in transcription regulation and nucleosome positioning. Controls particularly membrane and organelle development genes. Part of the SWI/SNF complex, an ATP-dependent chromatin remodeling complex, required for the positive and negative regulation of gene expression of a large number of genes. It changes chromatin structure by altering DNA-histone contacts within a nucleosome, leading eventually to a change in nucleosome position, thus facilitating or repressing binding of gene-specific transcription factors. The polypeptide is SWI/SNF and RSC complexes subunit arp9 (arp9) (Schizosaccharomyces pombe (strain 972 / ATCC 24843) (Fission yeast)).